The following is a 397-amino-acid chain: Elongation factor Tu 1 (397 aa).

The tr-type G domain occupies 10-207 (KPHVNVGTIG…TLDSYIPEPV (198 aa)). Residues 19 to 26 (GHVDHGKT) form a G1 region. GTP is bound at residue 19 to 26 (GHVDHGKT). Threonine 26 contacts Mg(2+). Residues 60 to 64 (GITIN) are G2. The segment at 81–84 (DCPG) is G3. GTP is bound by residues 81 to 85 (DCPGH) and 136 to 139 (NKAD). Residues 136–139 (NKAD) form a G4 region. Positions 174-176 (SAL) are G5.

Belongs to the TRAFAC class translation factor GTPase superfamily. Classic translation factor GTPase family. EF-Tu/EF-1A subfamily. In terms of assembly, monomer.

The protein localises to the cytoplasm. It carries out the reaction GTP + H2O = GDP + phosphate + H(+). Its function is as follows. GTP hydrolase that promotes the GTP-dependent binding of aminoacyl-tRNA to the A-site of ribosomes during protein biosynthesis. This chain is Elongation factor Tu 1, found in Stutzerimonas stutzeri (strain A1501) (Pseudomonas stutzeri).